The sequence spans 273 residues: Shikimate dehydrogenase (NADP(+)) (273 aa).

Residues 14–16 (SKS) and Thr-61 contribute to the shikimate site. Catalysis depends on Lys-65, which acts as the Proton acceptor. Glu-77 is a binding site for NADP(+). 2 residues coordinate shikimate: Asn-86 and Asp-102. NADP(+)-binding positions include 126-130 (GAGGA), 150-155 (NRTYEK), and Met-213. Tyr-215 serves as a coordination point for shikimate. Residue Gly-237 coordinates NADP(+).

The protein belongs to the shikimate dehydrogenase family. In terms of assembly, homodimer.

The enzyme catalyses shikimate + NADP(+) = 3-dehydroshikimate + NADPH + H(+). Its pathway is metabolic intermediate biosynthesis; chorismate biosynthesis; chorismate from D-erythrose 4-phosphate and phosphoenolpyruvate: step 4/7. In terms of biological role, involved in the biosynthesis of the chorismate, which leads to the biosynthesis of aromatic amino acids. Catalyzes the reversible NADPH linked reduction of 3-dehydroshikimate (DHSA) to yield shikimate (SA). The protein is Shikimate dehydrogenase (NADP(+)) of Aliivibrio fischeri (strain MJ11) (Vibrio fischeri).